Reading from the N-terminus, the 608-residue chain is Histone-arginine methyltransferase CARM1 (608 aa).

Residues 28–139 (ATVSVFPGAR…GHTLERSVFS (112 aa)) form an interaction with C9orf72 region. The 308-residue stretch at 147–454 (AVQYFQFYGY…KRQSYDISIV (308 aa)) folds into the SAM-dependent MTase PRMT-type domain. S-adenosyl-L-methionine is bound by residues Q160, R169, G193, and E215. S217 bears the Phosphoserine mark. Residue K228 forms a Glycyl lysine isopeptide (Lys-Gly) (interchain with G-Cter in ubiquitin) linkage. Positions 244 and 272 each coordinate S-adenosyl-L-methionine. Residues 347–380 (RILMAKSVKYTVNFLEAKEGDLHRIEIPFKFHML) are required for nuclear translocation. Residues 500–608 (TGSTYNLSSG…IPTNTMHYGS (109 aa)) form a transactivation domain region. R551 carries the post-translational modification Dimethylated arginine.

It belongs to the class I-like SAM-binding methyltransferase superfamily. Protein arginine N-methyltransferase family. Homodimer. Interacts with NR1H4. Interacts with SNRPC. Interacts with the C-terminus of NCOA2/GRIP1, NCO3/ACTR and NCOA1/SRC1. Part of a complex consisting of CARM1, EP300/P300 and NCOA2/GRIP1. Interacts with FLII, TP53, myogenic factor MEF2, EP300/P300, TRIM24, CREBBP and CTNNB1. Interacts with RELA. Identified in a complex containing CARM1, TRIM24 and NCOA2/GRIP1. Interacts with NCOA3/SRC3. Interacts with SKP2. Interacts (via PH domain-like fold) with C9orf72. Interacts with PARP1; promoting PARP1 recruimtent to replication forks. Post-translationally, phosphorylation at Ser-217 is strongly increased during mitosis, and decreases rapidly to a very low, basal level after entry into the G1 phase of the cell cycle. Phosphorylation at Ser-217 interferes with S-adenosyl-L-methionine binding and strongly reduces methyltransferase activity. Phosphorylation at Ser-217 may promote cytosolic location. Auto-methylated on Arg-551. Methylation enhances transcription coactivator activity. Methylation is required for its role in the regulation of pre-mRNA alternative splicing. In terms of processing, ubiquitinated by E3 ubiquitin-protein ligase complex containing FBXO9 at Lys-228; leading to proteasomal degradation. Ubiquitously expressed. Within the brain, present in proliferating cells from lateral ventricular zone and dentate gyrus (at protein level).

It localises to the nucleus. Its subcellular location is the cytoplasm. The protein localises to the chromosome. It catalyses the reaction L-arginyl-[protein] + 2 S-adenosyl-L-methionine = N(omega),N(omega)-dimethyl-L-arginyl-[protein] + 2 S-adenosyl-L-homocysteine + 2 H(+). Methylation of H3R17 (H3R17me) by CARM1 is stimulated by preacetylation of H3 'Lys-18' (H3K18ac) H3 'Lys-23' (H3K23ac) by EP300 and blocked by citrullination of H3 'Arg-17' (H3R17ci) by PADI4. In terms of biological role, methylates (mono- and asymmetric dimethylation) the guanidino nitrogens of arginyl residues in several proteins involved in DNA packaging, transcription regulation, pre-mRNA splicing, and mRNA stability. Recruited to promoters upon gene activation together with histone acetyltransferases from EP300/P300 and p160 families, methylates histone H3 at 'Arg-17' (H3R17me), forming mainly asymmetric dimethylarginine (H3R17me2a), leading to activation of transcription via chromatin remodeling. During nuclear hormone receptor activation and TCF7L2/TCF4 activation, acts synergically with EP300/P300 and either one of the p160 histone acetyltransferases NCOA1/SRC1, NCOA2/GRIP1 and NCOA3/ACTR or CTNNB1/beta-catenin to activate transcription. During myogenic transcriptional activation, acts together with NCOA3/ACTR as a coactivator for MEF2C. During monocyte inflammatory stimulation, acts together with EP300/P300 as a coactivator for NF-kappa-B. Acts as a coactivator for PPARG, promotes adipocyte differentiation and the accumulation of brown fat tissue. Plays a role in the regulation of pre-mRNA alternative splicing by methylation of splicing factors. Also seems to be involved in p53/TP53 transcriptional activation. Methylates EP300/P300, both at 'Arg-2142', which may loosen its interaction with NCOA2/GRIP1, and at 'Arg-580' and 'Arg-604' in the KIX domain, which impairs its interaction with CREB and inhibits CREB-dependent transcriptional activation. Also methylates arginine residues in RNA-binding proteins PABPC1, ELAVL1 and ELAV4, which may affect their mRNA-stabilizing properties and the half-life of their target mRNAs. Acts as a transcriptional coactivator of ACACA/acetyl-CoA carboxylase by enriching H3R17 methylation at its promoter, thereby positively regulating fatty acid synthesis. Independently of its methyltransferase activity, involved in replication fork progression: promotes PARP1 recruitment to replication forks, leading to poly-ADP-ribosylation of chromatin at replication forks and reduced fork speed. The polypeptide is Histone-arginine methyltransferase CARM1 (Carm1) (Mus musculus (Mouse)).